The sequence spans 257 residues: S-methyl-5'-thioadenosine phosphorylase (257 aa).

Phosphate is bound by residues Ser10 and 50–51 (RH). Residue Met180 participates in substrate binding. Thr181 serves as a coordination point for phosphate. 204-206 (DYD) lines the substrate pocket.

It belongs to the PNP/MTAP phosphorylase family. MTAP subfamily. As to quaternary structure, homohexamer. Dimer of a homotrimer.

The enzyme catalyses S-methyl-5'-thioadenosine + phosphate = 5-(methylsulfanyl)-alpha-D-ribose 1-phosphate + adenine. Its pathway is amino-acid biosynthesis; L-methionine biosynthesis via salvage pathway; S-methyl-5-thio-alpha-D-ribose 1-phosphate from S-methyl-5'-thioadenosine (phosphorylase route): step 1/1. Functionally, catalyzes the reversible phosphorylation of S-methyl-5'-thioadenosine (MTA) to adenine and 5-methylthioribose-1-phosphate. Involved in the breakdown of MTA, a major by-product of polyamine biosynthesis. Responsible for the first step in the methionine salvage pathway after MTA has been generated from S-adenosylmethionine. Has broad substrate specificity with 6-aminopurine nucleosides as preferred substrates. The protein is S-methyl-5'-thioadenosine phosphorylase of Pyrococcus horikoshii (strain ATCC 700860 / DSM 12428 / JCM 9974 / NBRC 100139 / OT-3).